The chain runs to 83 residues: Mitochondrial import inner membrane translocase subunit Tim8 B (83 aa).

The residue at position 2 (A2) is an N-acetylalanine. Residues 36–59 carry the Twin CX3C motif motif; the sequence is CWDKCVEKPGNRLDSRTENCLSSC. Cystine bridges form between C36/C59 and C40/C55.

The protein belongs to the small Tim family. As to quaternary structure, heterohexamer; possibly composed of 3 copies of TIMM8B and 3 copies of TIMM13, named soluble 70 kDa complex. Associates with the TIM22 complex, whose core is composed of TIMM22. As to expression, ubiquitous, with highest expression in heart, kidney, liver and skeletal muscle.

Its subcellular location is the mitochondrion inner membrane. In terms of biological role, probable mitochondrial intermembrane chaperone that participates in the import and insertion of some multi-pass transmembrane proteins into the mitochondrial inner membrane. Also required for the transfer of beta-barrel precursors from the TOM complex to the sorting and assembly machinery (SAM complex) of the outer membrane. Acts as a chaperone-like protein that protects the hydrophobic precursors from aggregation and guide them through the mitochondrial intermembrane space. The sequence is that of Mitochondrial import inner membrane translocase subunit Tim8 B (TIMM8B) from Homo sapiens (Human).